We begin with the raw amino-acid sequence, 1368 residues long: DNA-directed RNA polymerase subunit beta (1368 aa).

Belongs to the RNA polymerase beta chain family. As to quaternary structure, the RNAP catalytic core consists of 2 alpha, 1 beta, 1 beta' and 1 omega subunit. When a sigma factor is associated with the core the holoenzyme is formed, which can initiate transcription.

It catalyses the reaction RNA(n) + a ribonucleoside 5'-triphosphate = RNA(n+1) + diphosphate. In terms of biological role, DNA-dependent RNA polymerase catalyzes the transcription of DNA into RNA using the four ribonucleoside triphosphates as substrates. In Burkholderia cenocepacia (strain HI2424), this protein is DNA-directed RNA polymerase subunit beta.